The sequence spans 132 residues: Replication enhancer protein (132 aa).

The protein belongs to the geminiviridae replication enhancer protein family. Homooligomer. Interacts with the replication-associated protein (REP). Interacts with host proliferating cell nuclear antigen (PCNA). Interacts with host retinoblastoma-related protein 1 (RBR1), and may thereby deregulate the host cell cycle. Oligomerization and interaction with PCNA are necessary for optimal replication enhancement.

In terms of biological role, increases viral DNA accumulation. Enhances infectivity and symptom expression. This chain is Replication enhancer protein, found in Solanum lycopersicum (Tomato).